The primary structure comprises 154 residues: Protein X (154 aa).

Residues 28–50 form a disordered region; it reads RPLPGPLGAVPPSSPSAVPADDG. Over residues 33–48 the composition is skewed to low complexity; it reads PLGAVPPSSPSAVPAD. A mitochondrial targeting sequence region spans residues 68–117; the sequence is PCALRFTSARRMETTVNAPWSLPTVLHKRTLGLSGWSMTWIEEYIKDCVF.

The protein belongs to the orthohepadnavirus protein X family. As to quaternary structure, may form homodimer. May interact with host CEBPA, CFLAR, CREB1, DDB1, E4F1, HBXIP, HSPD1/HSP60, NFKBIA, POLR2E and SMAD4. Interacts with host SMC5-SMC6 complex and induces its degradation. Interacts with host TRPC4AP; leading to prevent ubiquitination of TRPC4AP. Interacts with host PLSCR1; this interaction promotes ubiquitination and degradation of HBx and impairs HBx-mediated cell proliferation. Post-translationally, a fraction may be phosphorylated in insect cells and HepG2 cells, a human hepatoblastoma cell line. Phosphorylated in vitro by host protein kinase C or mitogen-activated protein kinase. N-acetylated in insect cells.

Its subcellular location is the host cytoplasm. It is found in the host nucleus. The protein localises to the host mitochondrion. In terms of biological role, multifunctional protein that plays a role in silencing host antiviral defenses and promoting viral transcription. Does not seem to be essential for HBV infection. May be directly involved in development of cirrhosis and liver cancer (hepatocellular carcinoma). Most of cytosolic activities involve modulation of cytosolic calcium. The effect on apoptosis is controversial depending on the cell types in which the studies have been conducted. May induce apoptosis by localizing in mitochondria and causing loss of mitochondrial membrane potential. May also modulate apoptosis by binding host CFLAR, a key regulator of the death-inducing signaling complex (DISC). Promotes viral transcription by using the host E3 ubiquitin ligase DDB1 to target the SMC5-SMC6 complex to proteasomal degradation. This host complex would otherwise bind to viral episomal DNA, and prevents its transcription. Moderately stimulates transcription of many different viral and cellular transcription elements. Promoters and enhancers stimulated by HBx contain DNA binding sites for NF-kappa-B, AP-1, AP-2, c-EBP, ATF/CREB, or the calcium-activated factor NF-AT. This chain is Protein X, found in Homo sapiens (Human).